Consider the following 591-residue polypeptide: Aspartate--tRNA(Asp/Asn) ligase (591 aa).

Glutamate 175 is an L-aspartate binding site. Residues 199–202 (QQFK) are aspartate. L-aspartate is bound by residues arginine 221 and histidine 453. Position 221-223 (221-223 (RDE)) interacts with ATP. Residue glutamate 486 participates in ATP binding. Arginine 493 is an L-aspartate binding site. 538–541 (GIDR) is an ATP binding site.

This sequence belongs to the class-II aminoacyl-tRNA synthetase family. Type 1 subfamily. As to quaternary structure, homodimer.

The protein localises to the cytoplasm. The enzyme catalyses tRNA(Asx) + L-aspartate + ATP = L-aspartyl-tRNA(Asx) + AMP + diphosphate. In terms of biological role, aspartyl-tRNA synthetase with relaxed tRNA specificity since it is able to aspartylate not only its cognate tRNA(Asp) but also tRNA(Asn). Reaction proceeds in two steps: L-aspartate is first activated by ATP to form Asp-AMP and then transferred to the acceptor end of tRNA(Asp/Asn). The polypeptide is Aspartate--tRNA(Asp/Asn) ligase (Cereibacter sphaeroides (strain KD131 / KCTC 12085) (Rhodobacter sphaeroides)).